Here is a 425-residue protein sequence, read N- to C-terminus: MSSPLHYVLDGIHCEPHFFTVPLDHQQPDDEETITLFGRTLCRKDRLDDELPWLLYLQGGPGFGAPRPSANGGWIKRALQEFRVLLLDQRGTGHSTPIHAELLAHLNPRQQADYLSHFRADSIVRDAELIREQLSPDHPWSLLGQSFGGFCSLTYLSLFPDSLHEVYLTGGVAPIGRSADEVYRATYQRVADKNRAFFARFPHAQAIANRLATHLQRHDVRLPNGQRLTVEQLQQQGLDLGASGAFEELYYLLEDAFIGEKLNPAFLYQVQAMQPFNTNPVFAILHELIYCEGAASHWAAERVRGEFPALAWAQGKDFAFTGEMIFPWMFEQFRELIPLKEAAHLLAEKADWGPLYDPVQLARNKVPVACAVYAEDMYVEFDYSRETLKGLSNSRAWITNEYEHNGLRVDGEQILDRLIRLNRDC.

In terms of domain architecture, AB hydrolase-1 spans Pro52–Gly315. Residue Ser146 is the Nucleophile of the active site. Asp351 is a catalytic residue. His404 (proton donor) is an active-site residue.

This sequence belongs to the peptidase S33 family. In terms of assembly, homotetramer.

Its subcellular location is the cytoplasm. The enzyme catalyses Release of N-terminal proline from a peptide.. Functionally, higher activity toward long peptides. Acts on hydroxyproline beta-naphthylamide with almost as high an activity as on proline beta-naphthylamide. The protein is Proline iminopeptidase (pip) of Aeromonas sobria.